Here is a 232-residue protein sequence, read N- to C-terminus: Orotidine 5'-phosphate decarboxylase (232 aa).

Substrate-binding positions include Asp10, Lys32, 59-68 (DLKFHDIPNT), Thr119, Arg180, Gln189, Gly209, and Arg210. Catalysis depends on Lys61, which acts as the Proton donor.

This sequence belongs to the OMP decarboxylase family. Type 1 subfamily. As to quaternary structure, homodimer.

The enzyme catalyses orotidine 5'-phosphate + H(+) = UMP + CO2. It participates in pyrimidine metabolism; UMP biosynthesis via de novo pathway; UMP from orotate: step 2/2. Functionally, catalyzes the decarboxylation of orotidine 5'-monophosphate (OMP) to uridine 5'-monophosphate (UMP). This chain is Orotidine 5'-phosphate decarboxylase, found in Actinobacillus succinogenes (strain ATCC 55618 / DSM 22257 / CCUG 43843 / 130Z).